We begin with the raw amino-acid sequence, 504 residues long: Lysine--tRNA ligase (504 aa).

Residues E411 and E418 each contribute to the Mg(2+) site.

This sequence belongs to the class-II aminoacyl-tRNA synthetase family. In terms of assembly, homodimer. The cofactor is Mg(2+).

It is found in the cytoplasm. It catalyses the reaction tRNA(Lys) + L-lysine + ATP = L-lysyl-tRNA(Lys) + AMP + diphosphate. In Clostridium botulinum (strain Loch Maree / Type A3), this protein is Lysine--tRNA ligase.